The following is a 1032-amino-acid chain: Error-prone DNA polymerase (1032 aa).

This sequence belongs to the DNA polymerase type-C family. DnaE2 subfamily.

Its subcellular location is the cytoplasm. It carries out the reaction DNA(n) + a 2'-deoxyribonucleoside 5'-triphosphate = DNA(n+1) + diphosphate. Its function is as follows. DNA polymerase involved in damage-induced mutagenesis and translesion synthesis (TLS). It is not the major replicative DNA polymerase. The polypeptide is Error-prone DNA polymerase (Hahella chejuensis (strain KCTC 2396)).